Reading from the N-terminus, the 104-residue chain is L-rhamnose mutarotase (104 aa).

A substrate-binding site is contributed by Tyr-18. Catalysis depends on His-22, which acts as the Proton donor. Substrate contacts are provided by residues Tyr-41 and 76–77; that span reads WW.

Belongs to the rhamnose mutarotase family. As to quaternary structure, homodimer.

It localises to the cytoplasm. The enzyme catalyses alpha-L-rhamnose = beta-L-rhamnose. It functions in the pathway carbohydrate metabolism; L-rhamnose metabolism. Functionally, involved in the anomeric conversion of L-rhamnose. The chain is L-rhamnose mutarotase from Enterobacter sp. (strain 638).